The chain runs to 138 residues: Protein X (138 aa).

Residues 20–43 form a disordered region; it reads PLRGQPSGPSVSGTSAGSPSSAAS. The span at 25–43 shows a compositional bias: low complexity; it reads PSGPSVSGTSAGSPSSAAS. A mitochondrial targeting sequence region spans residues 68–113; that stretch reads PCCLGFTCADLRTMDSTVNFVPWHAKRQLGMMQKDFWTAYIRDQLL.

It belongs to the orthohepadnavirus protein X family. May form homodimer. May interact with host CEBPA, CFLAR, CREB1, DDB1, E4F1, HBXIP, HSPD1/HSP60, NFKBIA, POLR2E and SMAD4. Interacts with host SMC5-SMC6 complex and induces its degradation. Interacts with host TRPC4AP; leading to prevent ubiquitination of TRPC4AP. Interacts with host PLSCR1; this interaction promotes ubiquitination and degradation of HBx and impairs HBx-mediated cell proliferation. A fraction may be phosphorylated in insect cells and HepG2 cells, a human hepatoblastoma cell line. Phosphorylated in vitro by host protein kinase C or mitogen-activated protein kinase. N-acetylated in insect cells.

It is found in the host cytoplasm. The protein resides in the host nucleus. The protein localises to the host mitochondrion. Functionally, multifunctional protein that plays a role in silencing host antiviral defenses and promoting viral transcription. Does not seem to be essential for HBV infection. May be directly involved in development of cirrhosis and liver cancer (hepatocellular carcinoma). Most of cytosolic activities involve modulation of cytosolic calcium. The effect on apoptosis is controversial depending on the cell types in which the studies have been conducted. May induce apoptosis by localizing in mitochondria and causing loss of mitochondrial membrane potential. May also modulate apoptosis by binding host CFLAR, a key regulator of the death-inducing signaling complex (DISC). Promotes viral transcription by using the host E3 ubiquitin ligase DDB1 to target the SMC5-SMC6 complex to proteasomal degradation. This host complex would otherwise bind to viral episomal DNA, and prevents its transcription. Moderately stimulates transcription of many different viral and cellular transcription elements. Promoters and enhancers stimulated by HBx contain DNA binding sites for NF-kappa-B, AP-1, AP-2, c-EBP, ATF/CREB, or the calcium-activated factor NF-AT. In Ground squirrel hepatitis virus (strain 27) (GSHV), this protein is Protein X.